We begin with the raw amino-acid sequence, 356 residues long: Serpentine receptor class epsilon-29 (356 aa).

Helical transmembrane passes span 29–49, 61–81, 119–139, 161–181, 190–210, 251–271, and 281–301; these read IVEL…IYII, ILAI…LITI, LLIF…FGVL, LFIP…TSLA, FLAQ…YFFV, LVFV…ALFY, and FVEN…IFSV.

The protein belongs to the nematode receptor-like protein sre family.

It is found in the membrane. In Caenorhabditis elegans, this protein is Serpentine receptor class epsilon-29 (sre-29).